Here is a 363-residue protein sequence, read N- to C-terminus: Circumsporozoite protein (363 aa).

Positions 1–22 (MKNFILLAVSSILLVDLLPTHF) are cleaved as a signal peptide. Residues 48 to 57 (GAQQVRQSAS) are compositionally biased toward polar residues. A disordered region spans residues 48-278 (GAQQVRQSAS…GQNNQGANAP (231 aa)). The segment covering 61–96 (GLGEKPKEGADKEKKKEKGKEKEEEPKKPNENKLKQ) has biased composition (basic and acidic residues). The tract at residues 80 to 88 (KEKEEEPKK) is required for the binding to heparan sulfate proteoglycans (HSPGs) on the surface of host hepatocytes. The tract at residues 93 to 97 (KLKQP) is region I; contains the proteolytic cleavage site. The 1; approximate repeat unit spans residues 98 to 109 (NEGQPQAQGDGA). The interval 98-241 (NEGQPQAQGD…GQPQAQGDGA (144 aa)) is 12 X 12 AA approximate tandem repeats of N-A-G-Q-P-Q-A-Q-G-D-G-A. 11 consecutive repeat copies span residues 110 to 121 (NAGQPQAQGDGA), 122 to 133 (NAGQPQAQGDGA), 134 to 145 (NAGQPQAQGDGA), 146 to 157 (NAGQPQAQGDGA), 158 to 169 (NAGQPQAQGDGA), 170 to 181 (NAGQPQAQGDGA), 182 to 193 (NAGQPQAQGDGA), 194 to 205 (NAGQPQAQGDGA), 206 to 217 (NAGQPQAQGDGA), 218 to 229 (NAGQPQAQGDGA), and 230 to 241 (NAGQPQAQGDGA). The segment covering 248 to 259 (RNGGGAPAGGNE) has biased composition (gly residues). Residues 260 to 277 (GNKQAGKGQGQNNQGANA) show a composition bias toward low complexity. Residues 289–341 (KIRSSVTTEWTPCSVTCGNGVRIRRKAHAGNKKAEDLTMDDLEVEACVMDKCA) enclose the TSP type-1 domain. Disulfide bonds link cysteine 301–cysteine 335 and cysteine 305–cysteine 340. Threonine 304 carries O-linked (Fuc) threonine glycosylation. Residue cysteine 340 is the site of GPI-anchor amidated cysteine attachment. The propeptide at 341–363 (AGIFNVVSNSLGLVILLVLALFN) is removed in mature form.

Belongs to the plasmodium circumsporozoite protein family. In terms of processing, during host cell invasion, proteolytically cleaved at the cell membrane in the region I by a papain-like cysteine protease of parasite origin. Cleavage is triggered by the sporozoite contact with highly sulfated heparan sulfate proteoglycans (HSPGs) present on the host hepatocyte cell surface. Cleavage exposes the TSP type-1 (TSR) domain and is required for productive invasion of host hepatocytes but not for adhesion to the host cell membrane. Cleavage is dispensable for sporozoite development in the oocyst, motility and for traversal of host and vector cells. O-glycosylated; maybe by POFUT2.

Its subcellular location is the cell membrane. It localises to the cytoplasm. Essential sporozoite protein. In the mosquito vector, required for sporozoite development in the oocyst, migration through the vector hemolymph and entry into the vector salivary glands. In the vertebrate host, required for sporozoite migration through the host dermis and infection of host hepatocytes. Binds to highly sulfated heparan sulfate proteoglycans (HSPGs) on the surface of host hepatocytes. Functionally, in the vertebrate host, binds to highly sulfated heparan sulfate proteoglycans (HSPGs) on the surface of host hepatocytes and is required for sporozoite invasion of the host hepatocytes. This is Circumsporozoite protein from Plasmodium knowlesi (strain H).